The primary structure comprises 182 residues: MKQRLLFLGPPGAGKGTQAERLCAAHELMHLSTGDLLRAEVGAKTPLGQEAAAVMNRGELVSDELVLAIVENQLKNQSGGWLLDGFPRTLIQATALEPLLEELKQPIEAVVLLELNDAVLIERLISRGRSDDNESVIRNRLEVYREKTAPLIDHYRQQGLLQTVEAQGSIESIAISIEKSLC.

Position 12–17 (12–17 (GAGKGT)) interacts with ATP. The NMP stretch occupies residues 32–61 (STGDLLRAEVGAKTPLGQEAAAVMNRGELV). Residues Thr33, Arg38, 59-61 (ELV), 85-88 (GFPR), and Gln92 each bind AMP. Positions 126–132 (SRGRSDD) are LID. An ATP-binding site is contributed by Arg127. Arg129 and Arg140 together coordinate AMP. An ATP-binding site is contributed by Gly168.

This sequence belongs to the adenylate kinase family. As to quaternary structure, monomer.

Its subcellular location is the cytoplasm. It catalyses the reaction AMP + ATP = 2 ADP. It participates in purine metabolism; AMP biosynthesis via salvage pathway; AMP from ADP: step 1/1. Functionally, catalyzes the reversible transfer of the terminal phosphate group between ATP and AMP. Plays an important role in cellular energy homeostasis and in adenine nucleotide metabolism. This chain is Adenylate kinase, found in Prochlorococcus marinus (strain MIT 9303).